Here is a 227-residue protein sequence, read N- to C-terminus: Ribonuclease 3 (227 aa).

Residues 5-127 (YQKLSRRIGY…IIGAMYLDAG (123 aa)) form the RNase III domain. Glu-40 provides a ligand contact to Mg(2+). Asp-44 is an active-site residue. Positions 113 and 116 each coordinate Mg(2+). Residue Glu-116 is part of the active site. The DRBM domain occupies 154-224 (DAKTRLQEFL…AAKALKKLEK (71 aa)).

This sequence belongs to the ribonuclease III family. In terms of assembly, homodimer. The cofactor is Mg(2+).

The protein localises to the cytoplasm. It carries out the reaction Endonucleolytic cleavage to 5'-phosphomonoester.. Its function is as follows. Digests double-stranded RNA. Involved in the processing of primary rRNA transcript to yield the immediate precursors to the large and small rRNAs (23S and 16S). Processes some mRNAs, and tRNAs when they are encoded in the rRNA operon. Processes pre-crRNA and tracrRNA of type II CRISPR loci if present in the organism. The chain is Ribonuclease 3 from Marinomonas sp. (strain MWYL1).